An 87-amino-acid chain; its full sequence is MSEIKKVVRTLTGRVVSDKMNKTVTVLVERRVKHPVIGKVIRMSKKYHAHDENNECHEGDTVQIEESRKLSRTKAWTVSKLVERARV.

Belongs to the universal ribosomal protein uS17 family. As to quaternary structure, part of the 30S ribosomal subunit.

One of the primary rRNA binding proteins, it binds specifically to the 5'-end of 16S ribosomal RNA. This is Small ribosomal subunit protein uS17 from Thiobacillus denitrificans (strain ATCC 25259 / T1).